A 188-amino-acid chain; its full sequence is dCTP deaminase (188 aa).

DCTP is bound by residues 111–116 (KSTYAR), 135–137 (TLE), Gln-156, Tyr-170, and Gln-180. Glu-137 functions as the Proton donor/acceptor in the catalytic mechanism.

It belongs to the dCTP deaminase family. In terms of assembly, homotrimer.

It catalyses the reaction dCTP + H2O + H(+) = dUTP + NH4(+). It participates in pyrimidine metabolism; dUMP biosynthesis; dUMP from dCTP (dUTP route): step 1/2. In terms of biological role, catalyzes the deamination of dCTP to dUTP. This is dCTP deaminase from Polaromonas sp. (strain JS666 / ATCC BAA-500).